A 260-amino-acid chain; its full sequence is Dehydrogenase/reductase SDR family member 4 (260 aa).

18-42 (IVTASTDGIGLAIARRLAQDGAHVV) serves as a coordination point for NADP(+). At lysine 74 the chain carries N6-acetyllysine; alternate. At lysine 74 the chain carries N6-succinyllysine; alternate. Substrate is bound at residue serine 151. Tyrosine 164 functions as the Proton acceptor in the catalytic mechanism. Lysine 168 is an NADP(+) binding site. Lysine 198 bears the N6-acetyllysine; alternate mark. Lysine 198 bears the N6-succinyllysine; alternate mark. Serine 202 is modified (phosphoserine). An N6-succinyllysine modification is found at lysine 209. The Peroxisomal targeting signal motif lies at 258 to 260 (SRL).

The protein belongs to the short-chain dehydrogenases/reductases (SDR) family. Homotetramer. Detected in liver and kidney. Detected at lower levels in heart, lung, spleen, small intestine, testis, brain and stomach.

Its subcellular location is the peroxisome. It catalyses the reaction a secondary alcohol + NADP(+) = a ketone + NADPH + H(+). The enzyme catalyses 3alpha-hydroxy-5beta-pregnan-20-one + NADP(+) = 5beta-pregnan-3,20-dione + NADPH + H(+). It carries out the reaction 5beta-dihydrotestosterone + NADPH + H(+) = 5beta-androstane-3alpha,17beta-diol + NADP(+). The catalysed reaction is all-trans-retinol + NADP(+) = all-trans-retinal + NADPH + H(+). It catalyses the reaction isatin + NADPH + H(+) = 3-hydroxyindolin-2-one + NADP(+). Its activity is regulated as follows. Inhibited by flavonoids (kaempferol, quercetin, quercitrin, genistein), myristic acid, pyrazole, barbital, phenobarbital and CuSO4. NADPH-dependent oxidoreductase which catalyzes the reduction of a variety of compounds bearing carbonyl groups including ketosteroids, alpha-dicarbonyl compounds, aldehydes, aromatic ketones and quinones. Reduces all-trans-retinal and 9-cis retinal. Reduces 3-ketosteroids and benzil into 3alpha-hydroxysteroids and S-benzoin, respectively, in contrast to the stereoselectivity of primates DHRS4s which produce 3beta-hydroxysteroids and R-benzoin. In the reverse reaction, catalyze the NADP-dependent oxidation of 3alpha-hydroxysteroids and alcohol, but with much lower efficiency. Involved in the metabolism of 3alpha-hydroxysteroids, retinoid, isatin and xenobiotic carbonyl compounds. The protein is Dehydrogenase/reductase SDR family member 4 (DHRS4) of Oryctolagus cuniculus (Rabbit).